Consider the following 417-residue polypeptide: Histidinol-phosphate aminotransferase 1, chloroplastic (417 aa).

A chloroplast-targeting transit peptide spans 1 to 40 (MGVINVQGSPSFSIHSSESNLRKSRALKKPFCSIRNRVYC). Residue A41 is modified to N-acetylalanine. N6-(pyridoxal phosphate)lysine is present on K277.

The protein belongs to the class-II pyridoxal-phosphate-dependent aminotransferase family. Histidinol-phosphate aminotransferase subfamily. Homodimer. It depends on pyridoxal 5'-phosphate as a cofactor. In terms of tissue distribution, expressed in both vegetative and reproductive tissues.

It localises to the plastid. The protein resides in the chloroplast. The enzyme catalyses L-histidinol phosphate + 2-oxoglutarate = 3-(imidazol-4-yl)-2-oxopropyl phosphate + L-glutamate. It functions in the pathway amino-acid biosynthesis; L-histidine biosynthesis; L-histidine from 5-phospho-alpha-D-ribose 1-diphosphate: step 7/9. The chain is Histidinol-phosphate aminotransferase 1, chloroplastic (HISN6A) from Arabidopsis thaliana (Mouse-ear cress).